A 708-amino-acid chain; its full sequence is Exocyst complex component 5 (708 aa).

The residue at position 2 (alanine 2) is an N-acetylalanine. Residues 40-101 are a coiled coil; it reads KRLLEEFVNH…AFQHFQELDE (62 aa). Phosphothreonine occurs at positions 122, 395, and 405. Serine 412 is modified (phosphoserine).

Belongs to the SEC10 family. As to quaternary structure, the exocyst complex is composed of EXOC1, EXOC2, EXOC3, EXOC4, EXOC5, EXOC6, EXOC7 and EXOC8. Interacts with EXOC3L1. Ubiquitous.

It is found in the cytoplasm. The protein localises to the midbody. In terms of biological role, component of the exocyst complex involved in the docking of exocytic vesicles with fusion sites on the plasma membrane. The sequence is that of Exocyst complex component 5 (Exoc5) from Rattus norvegicus (Rat).